The primary structure comprises 670 residues: UvrABC system protein B (670 aa).

Residues 28–414 (NNFKQGLQEQ…KKIPIVEQII (387 aa)) enclose the Helicase ATP-binding domain. 41 to 48 (GATGTGKT) lines the ATP pocket. Positions 94 to 117 (YYDYYQPEAYVASSDTYIEKDSKI) match the Beta-hairpin motif. Residues 432-594 (QMDDLYFEIK…VTPTALNKTI (163 aa)) form the Helicase C-terminal domain. The UVR domain occupies 631–666 (NKEIKRLQKMMKEAAKTLDFEKAATLRDLILELEKK).

The protein belongs to the UvrB family. As to quaternary structure, forms a heterotetramer with UvrA during the search for lesions. Interacts with UvrC in an incision complex.

It localises to the cytoplasm. Functionally, the UvrABC repair system catalyzes the recognition and processing of DNA lesions. A damage recognition complex composed of 2 UvrA and 2 UvrB subunits scans DNA for abnormalities. Upon binding of the UvrA(2)B(2) complex to a putative damaged site, the DNA wraps around one UvrB monomer. DNA wrap is dependent on ATP binding by UvrB and probably causes local melting of the DNA helix, facilitating insertion of UvrB beta-hairpin between the DNA strands. Then UvrB probes one DNA strand for the presence of a lesion. If a lesion is found the UvrA subunits dissociate and the UvrB-DNA preincision complex is formed. This complex is subsequently bound by UvrC and the second UvrB is released. If no lesion is found, the DNA wraps around the other UvrB subunit that will check the other stand for damage. The protein is UvrABC system protein B of Onion yellows phytoplasma (strain OY-M).